Consider the following 168-residue polypeptide: Envelope glycoprotein L (168 aa).

The N-terminal stretch at 1-22 is a signal peptide; the sequence is MMWKWVTLLLFVLVCGDNPVNA. The interaction with gH stretch occupies residues 25–138; the sequence is HNPFVCCHQK…TDSSGFKNNL (114 aa).

It belongs to the herpesviridae glycoprotein L family. Interacts with glycoprotein H (gH); this interaction is necessary for the correct processing and cell surface expression of gH. The heterodimer gH/gL seems to interact with gB trimers during fusion.

Its subcellular location is the virion membrane. It localises to the host cell membrane. It is found in the host Golgi apparatus. The protein resides in the host trans-Golgi network. In terms of biological role, the heterodimer glycoprotein H-glycoprotein L is required for the fusion of viral and plasma membranes leading to virus entry into the host cell. Acts as a functional inhibitor of gH and maintains gH in an inhibited form. Upon binding to host integrins, gL dissociates from gH leading to activation of the viral fusion glycoproteins gB and gH. The chain is Envelope glycoprotein L from Connochaetes taurinus (Blue wildebeest).